The sequence spans 161 residues: Nucleotide-binding protein BamMC406_2474 (161 aa).

Belongs to the YajQ family.

In terms of biological role, nucleotide-binding protein. The chain is Nucleotide-binding protein BamMC406_2474 from Burkholderia ambifaria (strain MC40-6).